The sequence spans 38 residues: Large ribosomal subunit protein bL36 (38 aa).

Belongs to the bacterial ribosomal protein bL36 family.

The protein is Large ribosomal subunit protein bL36 of Chlorobaculum parvum (strain DSM 263 / NCIMB 8327) (Chlorobium vibrioforme subsp. thiosulfatophilum).